The sequence spans 329 residues: MQGSVTEFLRPRLVDIEQVNPTRAKVTLEPLERGFGHTLGNALRRILLSSMPGCAVTEVEIDGVLHEYSSKEGVQEDILEILLNLKGLAVVIEGKDEAMLTLSKSGAGPVTAADITHDGDVTIMNPEHVVCHLTGNNEISMRIRVERGRGYVPASARAQTEDDDRPIGRLLVDASFSPVARIAYNVEAARVEQRTDLDKLVIDMTTNGTLDPEEAIRRAATILAEQLDAFVELRDVTEPEQKEEKPEFDPILLRPVDDLELTVRSANCLKAEAIHYIGDLVQRTEVELLKTPNLGKKSLTEIKDVLASRGLSLGMRLENWPPASLVDDL.

The interval Met-1–Arg-234 is alpha N-terminal domain (alpha-NTD). Residues Phe-248 to Leu-329 form an alpha C-terminal domain (alpha-CTD) region.

It belongs to the RNA polymerase alpha chain family. As to quaternary structure, homodimer. The RNAP catalytic core consists of 2 alpha, 1 beta, 1 beta' and 1 omega subunit. When a sigma factor is associated with the core the holoenzyme is formed, which can initiate transcription.

The catalysed reaction is RNA(n) + a ribonucleoside 5'-triphosphate = RNA(n+1) + diphosphate. In terms of biological role, DNA-dependent RNA polymerase catalyzes the transcription of DNA into RNA using the four ribonucleoside triphosphates as substrates. The protein is DNA-directed RNA polymerase subunit alpha of Shewanella violacea (strain JCM 10179 / CIP 106290 / LMG 19151 / DSS12).